Here is a 181-residue protein sequence, read N- to C-terminus: Anthrone oxygenase encC (181 aa).

Helical transmembrane passes span 1-21, 65-81, 88-108, and 153-173; these read MASVQGLIKIVAITGGVWLSG, QIAACTSTAFAYLAWCA, LLYGTAACSVMGIVPYTLLFM, and FLAGIRGLLPLAGGILGLFAA.

The protein belongs to the anthrone oxygenase family. Endocrocin is specifically produced in conidia.

The protein resides in the membrane. Its function is as follows. Anthrone oxygenase; part of the gene cluster that mediates the biosynthesis of endocrocin, a simple anthraquinone interesting for many biotechnological applications. The pathway begins with the synthesis of atrochrysone thioester by the polyketide synthase (PKS) encA. The atrochrysone carboxyl ACP thioesterase encB then breaks the thioester bond and releases the atrochrysone carboxylic acid from encA. The atrochrysone carboxylic acid is then converted to endocrocin anthrone which is further oxidized into endocrocin by the anthrone oxygenase encC. The exact function of encD has not been identified yet, but it negatively regulates endocrocin production, likely through the modification of endocrocin itself. This is Anthrone oxygenase encC from Aspergillus fumigatus (strain ATCC MYA-4609 / CBS 101355 / FGSC A1100 / Af293) (Neosartorya fumigata).